The chain runs to 305 residues: Dihydroorotate dehydrogenase A (fumarate) (305 aa).

Residues S21 and K45–S46 each bind FMN. Residues K45, N69–L73, and N129 each bind substrate. N129 contacts FMN. C132 serves as the catalytic Nucleophile. FMN-binding residues include K167 and I193. N194–T195 lines the substrate pocket. Residues G219 and G245–G246 each bind FMN.

Belongs to the dihydroorotate dehydrogenase family. Type 1 subfamily. In terms of assembly, homodimer. Requires FMN as cofactor.

It is found in the cytoplasm. It catalyses the reaction (S)-dihydroorotate + fumarate = orotate + succinate. It participates in pyrimidine metabolism; UMP biosynthesis via de novo pathway. Catalyzes the conversion of dihydroorotate to orotate with fumarate as the electron acceptor. The chain is Dihydroorotate dehydrogenase A (fumarate) (pyrD) from Lactiplantibacillus plantarum (strain ATCC BAA-793 / NCIMB 8826 / WCFS1) (Lactobacillus plantarum).